The following is a 331-amino-acid chain: 3-dehydroquinate synthase homolog (331 aa).

It belongs to the archaeal-type DHQ synthase family.

The polypeptide is 3-dehydroquinate synthase homolog (Persephonella marina (strain DSM 14350 / EX-H1)).